Reading from the N-terminus, the 426-residue chain is Protein TolB homolog (426 aa).

The N-terminal stretch at 1 to 19 (MFLRSFLCLLCLLPSILYC) is a signal peptide.

Belongs to the TolB family.

It localises to the periplasm. This chain is Protein TolB homolog, found in Chlamydia muridarum (strain MoPn / Nigg).